The following is a 119-amino-acid chain: Immunoglobulin heavy variable 2-70D (119 aa).

The first 19 residues, 1–19 (MDILCSTLLLLTVPSWVLS), serve as a signal peptide directing secretion. Gln-20 bears the Pyrrolidone carboxylic acid mark. A framework-1 region spans residues 20–44 (QVTLKESGPALVKPTQTLTLTCTFS). Residues 20-119 (QVTLKESGPA…DTATYYCARI (100 aa)) enclose the Ig-like domain. A disulfide bridge connects residues Cys-41 and Cys-116. Residues 45–54 (GFSLSTSGMR) are complementarity-determining-1. Residues 55–71 (VSWIRQPPGKALEWLAR) form a framework-2 region. Residues 72–78 (IDWDDDK) form a complementarity-determining-2 region. The framework-3 stretch occupies residues 79–116 (FYSTSLKTRLTISKDTSKNQVVLTMTNMDPVDTATYYC). A complementarity-determining-3 region spans residues 117-119 (ARI).

In terms of assembly, immunoglobulins are composed of two identical heavy chains and two identical light chains; disulfide-linked.

Its subcellular location is the secreted. The protein resides in the cell membrane. Its function is as follows. V region of the variable domain of immunoglobulin heavy chains that participates in the antigen recognition. Immunoglobulins, also known as antibodies, are membrane-bound or secreted glycoproteins produced by B lymphocytes. In the recognition phase of humoral immunity, the membrane-bound immunoglobulins serve as receptors which, upon binding of a specific antigen, trigger the clonal expansion and differentiation of B lymphocytes into immunoglobulins-secreting plasma cells. Secreted immunoglobulins mediate the effector phase of humoral immunity, which results in the elimination of bound antigens. The antigen binding site is formed by the variable domain of one heavy chain, together with that of its associated light chain. Thus, each immunoglobulin has two antigen binding sites with remarkable affinity for a particular antigen. The variable domains are assembled by a process called V-(D)-J rearrangement and can then be subjected to somatic hypermutations which, after exposure to antigen and selection, allow affinity maturation for a particular antigen. The protein is Immunoglobulin heavy variable 2-70D of Homo sapiens (Human).